A 201-amino-acid chain; its full sequence is Holliday junction branch migration complex subunit RuvA (201 aa).

A domain I region spans residues 1–64 (MIGFIRGLLV…EDAHSLFGFG (64 aa)). The domain II stretch occupies residues 65-143 (TEAERGLFRS…IGVPSLAPAS (79 aa)). The tract at residues 144–153 (FAGGAAPLPA) is flexible linker. The interval 153 to 201 (AADPADEAVSALIALGFKPQEANTLVARQAAEGRSAEDLIRAALQSAVR) is domain III.

It belongs to the RuvA family. As to quaternary structure, homotetramer. Forms an RuvA(8)-RuvB(12)-Holliday junction (HJ) complex. HJ DNA is sandwiched between 2 RuvA tetramers; dsDNA enters through RuvA and exits via RuvB. An RuvB hexamer assembles on each DNA strand where it exits the tetramer. Each RuvB hexamer is contacted by two RuvA subunits (via domain III) on 2 adjacent RuvB subunits; this complex drives branch migration. In the full resolvosome a probable DNA-RuvA(4)-RuvB(12)-RuvC(2) complex forms which resolves the HJ.

Its subcellular location is the cytoplasm. In terms of biological role, the RuvA-RuvB-RuvC complex processes Holliday junction (HJ) DNA during genetic recombination and DNA repair, while the RuvA-RuvB complex plays an important role in the rescue of blocked DNA replication forks via replication fork reversal (RFR). RuvA specifically binds to HJ cruciform DNA, conferring on it an open structure. The RuvB hexamer acts as an ATP-dependent pump, pulling dsDNA into and through the RuvAB complex. HJ branch migration allows RuvC to scan DNA until it finds its consensus sequence, where it cleaves and resolves the cruciform DNA. This chain is Holliday junction branch migration complex subunit RuvA, found in Methylococcus capsulatus (strain ATCC 33009 / NCIMB 11132 / Bath).